A 321-amino-acid polypeptide reads, in one-letter code: MALTMTLKEELARVPVAATPERRAETAAMLRFAGGLHLVAGRVVVEAELDHGASVRRLRAAITELYGLAPEIVVVSGGNLRRGQRYVLRVVRGGEDLARQTGLIDQRGRPVRGLAPALVSGTTAATAAVWRGALLAHGSLTEPGRSAALEVTTPGPEAALALVGAARRLHVAAKAREVRQSDRVVVRDGEAIATLLAAVGAEQTATLWRERRERKEVRATANRLANFDDANLRRSAQAAVMAGAKVERALEILGDEVPDHLRYAGRLRLEHKQASLDELGRLADPPMTKDAVAGRIRRLLAMADKRAAERGIPGTDAASEG.

Residues 275–308 constitute a DNA-binding region (H-T-H motif); the sequence is SLDELGRLADPPMTKDAVAGRIRRLLAMADKRAA.

This sequence belongs to the WhiA family.

Functionally, involved in cell division and chromosome segregation. This chain is Probable cell division protein WhiA, found in Micrococcus luteus (strain ATCC 4698 / DSM 20030 / JCM 1464 / CCM 169 / CCUG 5858 / IAM 1056 / NBRC 3333 / NCIMB 9278 / NCTC 2665 / VKM Ac-2230) (Micrococcus lysodeikticus).